A 303-amino-acid polypeptide reads, in one-letter code: Nucleotide-binding protein Acry_0446 (303 aa).

Residue 10 to 17 (GLSGAGRN) participates in ATP binding. Residue 54 to 57 (DART) coordinates GTP.

Belongs to the RapZ-like family.

Functionally, displays ATPase and GTPase activities. This chain is Nucleotide-binding protein Acry_0446, found in Acidiphilium cryptum (strain JF-5).